The chain runs to 122 residues: Antitoxin protein TsiV3 (122 aa).

The N-terminal stretch at 1–24 (MNNLLSAYVTMLLILLSISGGAIA) is a signal peptide. Disulfide bonds link C28–C41 and C82–C100.

As to quaternary structure, homodimer; dimerization is critical for inhibitory activity. Forms a heterotetramer with VgrG3 composed of one TsiV3 homodimer and two VgrG3 molecules.

In terms of biological role, immunity protein that plays a role in preventing early activation of toxin VgrG3. This is Antitoxin protein TsiV3 from Vibrio cholerae serotype O1 (strain ATCC 39315 / El Tor Inaba N16961).